Reading from the N-terminus, the 261-residue chain is Kallikrein-1 (261 aa).

An N-terminal signal peptide occupies residues 1–18 (MWFLILFLALSLGRNDAA). A propeptide spans 19 to 24 (PPVQSR) (activation peptide). A Peptidase S1 domain is found at 25 to 258 (VVGGYNCEMN…FTPWIKEVMK (234 aa)). 5 disulfide bridges follow: cysteine 31–cysteine 173, cysteine 50–cysteine 66, cysteine 152–cysteine 219, cysteine 184–cysteine 198, and cysteine 209–cysteine 234. The Charge relay system role is filled by histidine 65. Asparagine 108 carries N-linked (GlcNAc...) asparagine glycosylation. Aspartate 120 functions as the Charge relay system in the catalytic mechanism. Serine 213 acts as the Charge relay system in catalysis.

The protein belongs to the peptidase S1 family. Kallikrein subfamily. As to expression, high levels in pancreas, submaxillary and parotid glands, spleen, and kidney.

The enzyme catalyses Preferential cleavage of Arg-|-Xaa bonds in small molecule substrates. Highly selective action to release kallidin (lysyl-bradykinin) from kininogen involves hydrolysis of Met-|-Xaa or Leu-|-Xaa.. The sequence is that of Kallikrein-1 (Ngfg) from Rattus norvegicus (Rat).